Reading from the N-terminus, the 619-residue chain is Long-chain fatty acid transport protein 6 (619 aa).

A run of 2 helical transmembrane segments spans residues 22-42 (LLFPYFWDDFWFVLKVVLIII) and 119-139 (VHVWFGLAKLGCVVAFLNTNI). 221–232 (YIFTSGTTGLPK) is a binding site for AMP.

It belongs to the ATP-dependent AMP-binding enzyme family. As to expression, strongly expressed in heart and localizes to cardiac myocytes. Expressed at moderate levels in placenta, testis, and adrenal glands. Expressed at very low levels in kidney, bladder and uterus.

The protein localises to the cell membrane. It is found in the sarcolemma. It carries out the reaction a fatty acid(in) = a fatty acid(out). The catalysed reaction is hexadecanoate(out) = hexadecanoate(in). It catalyses the reaction (9Z)-octadecenoate(out) = (9Z)-octadecenoate(in). The enzyme catalyses (9Z,12Z)-octadecadienoate(out) = (9Z,12Z)-octadecadienoate(in). It carries out the reaction a very long-chain fatty acid + ATP + CoA = a very long-chain fatty acyl-CoA + AMP + diphosphate. The catalysed reaction is tetracosanoate + ATP + CoA = tetracosanoyl-CoA + AMP + diphosphate. It catalyses the reaction a long-chain fatty acid + ATP + CoA = a long-chain fatty acyl-CoA + AMP + diphosphate. The enzyme catalyses (5Z,8Z,11Z,14Z)-eicosatetraenoate + ATP + CoA = (5Z,8Z,11Z,14Z)-eicosatetraenoyl-CoA + AMP + diphosphate. It carries out the reaction (9Z)-octadecenoate + ATP + CoA = (9Z)-octadecenoyl-CoA + AMP + diphosphate. Its function is as follows. Mediates the import of long-chain fatty acids (LCFA) into the cell by facilitating their transport at the plasma membrane. Also functions as an acyl-CoA ligase catalyzing the ATP-dependent formation of fatty acyl-CoA using LCFA and very-long-chain fatty acids (VLCFA) as substrates. Plays a pivotal role in regulating available LCFA substrates from exogenous sources in tissues undergoing high levels of beta-oxidation such as the heart. In Homo sapiens (Human), this protein is Long-chain fatty acid transport protein 6 (SLC27A6).